A 496-amino-acid chain; its full sequence is Genome polyprotein (496 aa).

At serine 1–serine 447 the chain is on the extracellular side. Disulfide bonds link cysteine 3-cysteine 30, cysteine 60-cysteine 116, cysteine 60-cysteine 121, cysteine 74-cysteine 105, cysteine 92-cysteine 116, and cysteine 92-cysteine 121. The tract at residues aspartate 98–glycine 111 is fusion peptide. Asparagine 154 carries an N-linked (GlcNAc...) asparagine; by host glycan. Disulfide bonds link cysteine 186–cysteine 290 and cysteine 307–cysteine 338. Residues isoleucine 448–glycine 468 traverse the membrane as a helical segment. Residues leucine 469 to serine 479 are Cytoplasmic-facing. A helical membrane pass occupies residues phenylalanine 480–alanine 496.

Homodimer; in the endoplasmic reticulum and Golgi. Post-translationally, N-glycosylated.

It is found in the virion membrane. The protein resides in the host endoplasmic reticulum membrane. Its function is as follows. Binds to host cell surface receptor and mediates fusion between viral and cellular membranes. Envelope protein is synthesized in the endoplasmic reticulum in the form of heterodimer with protein prM. They play a role in virion budding in the ER, and the newly formed immature particle is covered with 60 spikes composed of heterodimer between precursor prM and envelope protein E. The virion is transported to the Golgi apparatus where the low pH causes dissociation of PrM-E heterodimers and formation of E homodimers. prM-E cleavage is ineficient, and many virions are only partially matured. These uncleaved prM would play a role in immune evasion. The protein is Genome polyprotein of Bos taurus (Bovine).